Here is a 530-residue protein sequence, read N- to C-terminus: AA9 family lytic polysaccharide monooxygenase C (530 aa).

Residues 1–18 (MQLKSTVHFLSLLAYTAA) form the signal peptide. 2 residues coordinate Cu(2+): His-19 and His-103. 2 disulfides stabilise this stretch: Cys-72–Cys-190 and Cys-114–Cys-118. N-linked (GlcNAc...) asparagine glycosylation is present at Asn-150. Gln-185 lines the O2 pocket. Tyr-187 provides a ligand contact to Cu(2+). Residues 238 to 251 (YGSGSSSSQNSVES) show a composition bias toward low complexity. 4 disordered regions span residues 238–279 (YGSG…STSA), 297–329 (ESSSALDAPKSTDAVKSVEAKETTKVEEVSSSA), 348–375 (YSSASPSSSPVLSSSKPASTSNPEKLSS), and 492–512 (GNGASAAAEPNTGTGSGGTTP). Positions 312–324 (KSVEAKETTKVEE) are enriched in basic and acidic residues. Residues 348-368 (YSSASPSSSPVLSSSKPASTS) are compositionally biased toward low complexity.

This sequence belongs to the polysaccharide monooxygenase AA9 family. Cu(2+) serves as cofactor.

Its subcellular location is the secreted. It carries out the reaction [(1-&gt;4)-beta-D-glucosyl]n+m + reduced acceptor + O2 = 4-dehydro-beta-D-glucosyl-[(1-&gt;4)-beta-D-glucosyl]n-1 + [(1-&gt;4)-beta-D-glucosyl]m + acceptor + H2O.. Lytic polysaccharide monooxygenase (LPMO) that depolymerizes polysaccharides via the oxidation of scissile alpha- or beta-(1-4)-glycosidic bonds, yielding C1 or C4 oxidation products. Catalysis by LPMOs requires the reduction of the active-site copper from Cu(II) to Cu(I) by a reducing agent and H(2)O(2) or O(2) as a cosubstrate. Amorphous cellulose is not a suitable substrate for LPMO9C, which may act at the surface of cellulose microfibrils without any release of soluble products. This chain is AA9 family lytic polysaccharide monooxygenase C, found in Geotrichum candidum (Oospora lactis).